The following is a 251-amino-acid chain: Pyrroloquinoline-quinone synthase (251 aa).

This sequence belongs to the PqqC family.

The enzyme catalyses 6-(2-amino-2-carboxyethyl)-7,8-dioxo-1,2,3,4,7,8-hexahydroquinoline-2,4-dicarboxylate + 3 O2 = pyrroloquinoline quinone + 2 H2O2 + 2 H2O + H(+). It participates in cofactor biosynthesis; pyrroloquinoline quinone biosynthesis. In terms of biological role, ring cyclization and eight-electron oxidation of 3a-(2-amino-2-carboxyethyl)-4,5-dioxo-4,5,6,7,8,9-hexahydroquinoline-7,9-dicarboxylic-acid to PQQ. The chain is Pyrroloquinoline-quinone synthase from Pseudomonas putida (strain W619).